Reading from the N-terminus, the 221-residue chain is Protein myomaker (221 aa).

Residues 1–3 (MGT) lie on the Extracellular side of the membrane. The chain crosses the membrane as a helical span at residues 4–24 (VVAKLLLPTLSSLAFLPTVSI). The Cytoplasmic portion of the chain corresponds to 25-29 (ATKRR). The chain crosses the membrane as a helical span at residues 30-50 (FYMEAMVYLFTMFFVAFSHAC). At 51 to 64 (DGPGLSVLCFMRRD) the chain is on the extracellular side. The chain crosses the membrane as a helical span at residues 65 to 85 (ILEYFSIYGTALSMWVSLMAL). Over 86 to 93 (ADFDEPQR) the chain is Cytoplasmic. Residues 94–110 (STFTMLGVLTIAVRTFH) form a helical membrane-spanning segment. The Extracellular portion of the chain corresponds to 111-113 (DRW). The helical transmembrane segment at 114-134 (GYGVYSGPIGTATLIIAVKWL) threads the bilayer. Topologically, residues 135 to 153 (KKMKEKKGLYPDKSIYTQQ) are cytoplasmic. The helical transmembrane segment at 154–174 (IGPGLCFGALALMLRFFFEEW) threads the bilayer. Residue Asp-175 is a topological domain, extracellular. The helical transmembrane segment at 176-196 (YTYVHSFYHCALAMSFVLLLP) threads the bilayer. Residues 197–221 (KVNKKAGNAGAPAKLTFSTLCCTCV) are Cytoplasmic-facing. S-palmitoyl cysteine attachment occurs at residues Cys-217 and Cys-218.

This sequence belongs to the TMEM8 family. In terms of assembly, interacts with MYMX. Palmitoylated at the C-terminus; palmitoylation promotes localization to the Golgi apparatus. As to expression, specifically expressed in skeletal muscle during embryogenesis and adult muscle regeneration.

The protein resides in the cell membrane. Its subcellular location is the golgi apparatus membrane. In terms of biological role, myoblast-specific protein that mediates myoblast fusion, an essential step for the formation of multi-nucleated muscle fibers. Actively participates in the membrane fusion reaction by mediating the mixing of cell membrane lipids (hemifusion) upstream of MYMX. Acts independently of MYMX. Involved in skeletal muscle regeneration in response to injury by mediating the fusion of satellite cells, a population of muscle stem cells, with injured myofibers. Also involved in skeletal muscle hypertrophy, probably by mediating the fusion of satellite cells with myofibers. The chain is Protein myomaker from Mus musculus (Mouse).